Here is a 418-residue protein sequence, read N- to C-terminus: Deoxyribonuclease Tat-D (418 aa).

E185, H226, H277, and D327 together coordinate a divalent metal cation.

This sequence belongs to the metallo-dependent hydrolases superfamily. TatD-type hydrolase family. The cofactor is Mg(2+).

It localises to the cytoplasm. Has both endo- and exonuclease activities. Incises double-stranded DNA without obvious specificity via its endonuclease activity and excises the DNA from the 3'-to 5'-end by its exonuclease activity. May have a role in apoptosis. The sequence is that of Deoxyribonuclease Tat-D from Saccharomyces cerevisiae (strain ATCC 204508 / S288c) (Baker's yeast).